Here is a 339-residue protein sequence, read N- to C-terminus: Dual specificity protein phosphatase 12 (339 aa).

M1 bears the N-acetylmethionine mark. Residues 1 to 22 (MLEVQSSNHGCERQAPTTSPAS) show a composition bias toward polar residues. A disordered region spans residues 1–25 (MLEVQSSNHGCERQAPTTSPASSAG). The 145-residue stretch at 26–170 (HAVEVRPGLY…LKLYEAMGHE (145 aa)) folds into the Tyrosine-protein phosphatase domain. C114 serves as the catalytic Phosphocysteine intermediate. A substrate-binding site is contributed by 115–120 (HAGVSR). Position 334 is a phosphoserine (S334).

Belongs to the protein-tyrosine phosphatase family. Non-receptor class dual specificity subfamily. Monomer. It depends on Zn(2+) as a cofactor.

The protein resides in the nucleus. The protein localises to the cytoplasm. It is found in the cytosol. It carries out the reaction O-phospho-L-tyrosyl-[protein] + H2O = L-tyrosyl-[protein] + phosphate. It catalyses the reaction O-phospho-L-seryl-[protein] + H2O = L-seryl-[protein] + phosphate. The catalysed reaction is O-phospho-L-threonyl-[protein] + H2O = L-threonyl-[protein] + phosphate. In terms of biological role, dual specificity phosphatase; can dephosphorylate both phosphotyrosine and phosphoserine or phosphothreonine residues. Can dephosphorylate glucokinase (in vitro). Has phosphatase activity with the synthetic substrate 6,8-difluoro-4-methylumbelliferyl phosphate and other in vitro substrates. The sequence is that of Dual specificity protein phosphatase 12 (Dusp12) from Rattus norvegicus (Rat).